The primary structure comprises 260 residues: Ribonuclease PH (260 aa).

Phosphate-binding positions include R88 and 126–128 (GTR).

Belongs to the RNase PH family. As to quaternary structure, homohexameric ring arranged as a trimer of dimers.

The enzyme catalyses tRNA(n+1) + phosphate = tRNA(n) + a ribonucleoside 5'-diphosphate. In terms of biological role, phosphorolytic 3'-5' exoribonuclease that plays an important role in tRNA 3'-end maturation. Removes nucleotide residues following the 3'-CCA terminus of tRNAs; can also add nucleotides to the ends of RNA molecules by using nucleoside diphosphates as substrates, but this may not be physiologically important. Probably plays a role in initiation of 16S rRNA degradation (leading to ribosome degradation) during starvation. This chain is Ribonuclease PH, found in Mycolicibacterium gilvum (strain PYR-GCK) (Mycobacterium gilvum (strain PYR-GCK)).